A 356-amino-acid chain; its full sequence is S-adenosylmethionine:tRNA ribosyltransferase-isomerase (356 aa).

It belongs to the QueA family. As to quaternary structure, monomer.

The protein localises to the cytoplasm. It catalyses the reaction 7-aminomethyl-7-carbaguanosine(34) in tRNA + S-adenosyl-L-methionine = epoxyqueuosine(34) in tRNA + adenine + L-methionine + 2 H(+). Its pathway is tRNA modification; tRNA-queuosine biosynthesis. Its function is as follows. Transfers and isomerizes the ribose moiety from AdoMet to the 7-aminomethyl group of 7-deazaguanine (preQ1-tRNA) to give epoxyqueuosine (oQ-tRNA). In Shigella dysenteriae serotype 1 (strain Sd197), this protein is S-adenosylmethionine:tRNA ribosyltransferase-isomerase.